The chain runs to 1580 residues: Adhesion G protein-coupled receptor L3 (1580 aa).

A signal peptide spans 1–19 (MWPSQLLVFMMLLAPIIHG). Residues 20 to 949 (GKHSERHPAL…VHDLLLDVIT (930 aa)) are Extracellular-facing. Residues 23–81 (SERHPALASPLRHAERGPGGALPPRHLLQQPAAERATAHRGPGPRGATRGVRGPGAHGA) are disordered. The 90-residue stretch at 103–192 (SCESYPIELR…KYLEVQYECV (90 aa)) folds into the SUEL-type lectin domain. 5 cysteine pairs are disulfide-bonded: Cys104–Cys134, Cys113–Cys191, Cys146–Cys178, Cys159–Cys165, and Cys203–Cys385. Asn161 carries N-linked (GlcNAc...) asparagine glycosylation. Positions 202-461 (LCPGLLKGVY…VVKYSLDFGP (260 aa)) constitute an Olfactomedin-like domain. The tract at residues 317 to 347 (YHDTSPYRWGGKSDIDLAVDENGLWVIYATE) is interaction with FLRT3. The Ca(2+) site is built by Asp332, Asn380, Ala381, and Val435. Residues 494-540 (EISTTGPLGTGSTTTSTTLRTTTWSPGRSTTPSVSGRRNRSTSTPSP) are disordered. Positions 496-521 (STTGPLGTGSTTTSTTLRTTTWSPGR) are enriched in low complexity. The span at 522–539 (STTPSVSGRRNRSTSTPS) shows a compositional bias: polar residues. N-linked (GlcNAc...) asparagine glycans are attached at residues Asn532, Asn617, Asn827, Asn840, Asn885, and Asn911. The GAIN-B domain maps to 756–935 (DIVRENTDNI…AVLMAHVEVK (180 aa)). 2 cysteine pairs are disulfide-bonded: Cys886–Cys917 and Cys905–Cys919. Residues 886–935 (CSFWSYSKRTMTGYWSTQGCRLLTTNKTHTTCSCNHLTNFAVLMAHVEVK) form a GPS region. Residues 923–939 (TNFAVLMAHVEVKHSDA) form a stachel region. A helical membrane pass occupies residues 950–970 (WVGILLSLVCLLICIFTFCFF). The Cytoplasmic segment spans residues 971-978 (RGLQSDRN). Residues 979-999 (TIHKNLCISLFVAELLFLIGI) traverse the membrane as a helical segment. A glycan (N-linked (GlcNAc...) asparagine) is linked at Asn1000. The Extracellular segment spans residues 1000 to 1007 (NRTDQPIA). Residues 1008–1028 (CAVFAALLHFFFLAAFTWMFL) traverse the membrane as a helical segment. At 1029–1050 (EGVQLYIMLVEVFESEHSRRKY) the chain is on the cytoplasmic side. A helical membrane pass occupies residues 1051-1071 (FYLVGYGMPALIVAVSAAVDY). Topologically, residues 1072–1088 (RSYGTDKVCWLRLDTYF) are extracellular. Residues 1089 to 1109 (IWSFIGPATLIIMLNVIFLGI) traverse the membrane as a helical segment. The Cytoplasmic segment spans residues 1110-1142 (ALYKMFHHTAILKPESGCLDNINYEDNRPFIKS). The chain crosses the membrane as a helical span at residues 1143–1163 (WVIGAIALLCLLGLTWAFGLM). Residues 1164–1169 (YINEST) are Extracellular-facing. N-linked (GlcNAc...) asparagine glycosylation occurs at Asn1166. The helical transmembrane segment at 1170–1190 (VIMAYLFTIFNSLQGMFIFIF) threads the bilayer. The Cytoplasmic segment spans residues 1191–1580 (HCVLQKKVRK…KGPAHLVTSL (390 aa)). The interval 1213–1238 (GRSTESSIGSGKTSGSRTPGRYSTGS) is disordered. Position 1254 is a phosphoserine (Ser1254). Residues 1555–1580 (FIVPPNKDGTPPEGSSKGPAHLVTSL) form a disordered region. The PDZ-binding motif lies at 1575–1580 (HLVTSL).

The protein belongs to the G-protein coupled receptor 2 family. LN-TM7 subfamily. Heterodimer of 2 chains generated by proteolytic processing; the large extracellular N-terminal fragment and the membrane-bound C-terminal fragment predominantly remain associated and non-covalently linked. Interacts (via olfactomedin-like domain) with FLRT1 (via extracellular domain). Interacts (via olfactomedin-like domain) with FLRT2 (via extracellular domain). Interacts (via olfactomedin-like domain) with FLRT3 (via extracellular domain); the interaction is direct. Interacts (via extracellular domain) with TENM1. Interacts (via extracellular domain) with TENM2. Interacts (via extracellular domain) with TENM3. Identified in a complex with FLRT3 and UNC5B; does not interact with UNC5B by itself. Identified in a complex with FLRT3 and UNC5D; does not interact with UNC5D by itself. As to quaternary structure, interacts (via PDZ-binding motif) with SHANK3. Interacts (via PDZ-binding motif) with DLG4. Autoproteolytically processed at the GPS region of the GAIN-B domain; this cleavage modulates receptor activity. Brain-specific distribution but low levels are also detected in lung and spleen.

It localises to the cell membrane. The protein resides in the postsynaptic cell membrane. It is found in the cell projection. Its subcellular location is the axon. The protein localises to the cell junction. Its activity is regulated as follows. Forms a heterodimer of 2 chains generated by proteolytic processing that remain associated through non-covalent interactions mediated by the GAIN-B domain. In the inactivated receptor, the Stachel sequence (also named stalk) is embedded in the GAIN-B domain, where it adopts a beta-strand conformation. On activation, the Stachel moves into the 7 transmembrane region and adopts a twisted hook-shaped configuration that forms contacts within the receptor, leading to coupling of a G-alpha protein, which activates signaling. The cleaved GAIN-B and N-terminal domains can then dissociate from the rest of the receptor. Functionally, orphan adhesion G-protein coupled receptor (aGPCR), which mediates synapse specificity. Ligand binding causes a conformation change that triggers signaling via guanine nucleotide-binding proteins (G proteins) and modulates the activity of downstream effectors. ADGRL3 is coupled with different classes of G alpha proteins, such as G(12)/G(13), G(s), G(i) or G(q), depending on the context. Coupling to G(12)/G(13) G proteins, which mediates the activation Rho small GTPases is the most efficient. Following G-protein coupled receptor activation, associates with cell adhesion molecules that are expressed at the surface of adjacent cells to direct synapse specificity. Specifically mediates the establishment of Schaffer-collateral synapses formed by CA3-region axons on CA1-region pyramidal neurons in the hippocampus. Localizes to postsynaptic spines in excitatory synapses in the S.oriens and S.radiatum and interacts with presynaptic cell adhesion molecules FLRT3 and TENM2, promoting synapse formation. Plays a role in the development of glutamatergic synapses in the cortex. Important in determining the connectivity rates between the principal neurons in the cortex. In terms of biological role, orphan adhesion G-protein coupled receptor (aGPCR), which mediates synapse specificity. Ligand binding causes a conformation change that triggers signaling via guanine nucleotide-binding proteins (G proteins) and modulates the activity of downstream effectors, such as adenylate cyclase. Isoform 1 is specifically coupled to G(s) G proteins and mediates activation of adenylate cyclase activity. Following G-protein coupled receptor activation, undergoes liquid-liquid phase transition, associates with (1) cell adhesion molecules that are expressed at the surface of adjacent cells, as well as (2) PDZ-containing proteins, such as SHANK3 and DLG4, in the cytoplasm to direct synapse formation. The sequence is that of Adhesion G protein-coupled receptor L3 from Bos taurus (Bovine).